Consider the following 203-residue polypeptide: CASP-like protein 2U2 (203 aa).

Residues 1 to 21 (MGGFVDDGAAGLAPSHGSSRA) are disordered. The Cytoplasmic segment spans residues 1-27 (MGGFVDDGAAGLAPSHGSSRAGRGLEG). A helical membrane pass occupies residues 28–48 (AGVFLRFVASLLSIAGLMLLV). Residues 49–73 (KDNQTVQQMVATEAVTLETKYSDIS) are Extracellular-facing. Asn51 carries an N-linked (GlcNAc...) asparagine glycan. A helical transmembrane segment spans residues 74–94 (AFVFLLYTNGLVAVYCFFLAL). Residues 95-108 (ASVFSLIASARSGK) are Cytoplasmic-facing. A helical membrane pass occupies residues 109–129 (LAGWVTFVLDQGLAYVLLAAA). At 130–163 (AASTEVLYLAENGDLKTSWAEICSQFGHFCHMAR) the chain is on the extracellular side. Residues 164-184 (ASIVVSFLSMLAMAVLSVMSA) traverse the membrane as a helical segment. The Cytoplasmic segment spans residues 185–203 (QQLFSKYRRPMTAKTAQDI).

The protein belongs to the Casparian strip membrane proteins (CASP) family. Homodimer and heterodimers.

Its subcellular location is the cell membrane. This is CASP-like protein 2U2 from Osmunda lancea (Fern).